We begin with the raw amino-acid sequence, 390 residues long: UPF0229 protein OB2647 (390 aa).

The tract at residues 99–121 is disordered; sequence NASQQGQQGQGNGKKAGDQPGTD.

It belongs to the UPF0229 family.

The polypeptide is UPF0229 protein OB2647 (Oceanobacillus iheyensis (strain DSM 14371 / CIP 107618 / JCM 11309 / KCTC 3954 / HTE831)).